Reading from the N-terminus, the 117-residue chain is Large ribosomal subunit protein uL18 (117 aa).

Belongs to the universal ribosomal protein uL18 family. In terms of assembly, part of the 50S ribosomal subunit; part of the 5S rRNA/L5/L18/L25 subcomplex. Contacts the 5S and 23S rRNAs.

Its function is as follows. This is one of the proteins that bind and probably mediate the attachment of the 5S RNA into the large ribosomal subunit, where it forms part of the central protuberance. The polypeptide is Large ribosomal subunit protein uL18 (Nitrosococcus oceani (strain ATCC 19707 / BCRC 17464 / JCM 30415 / NCIMB 11848 / C-107)).